The chain runs to 150 residues: 3-dehydroquinate dehydratase (150 aa).

The active-site Proton acceptor is the Tyr-25. Residues Asn-76, His-82, and Asp-89 each contribute to the substrate site. The active-site Proton donor is His-102. Substrate is bound by residues 103-104 (LS) and Arg-113.

This sequence belongs to the type-II 3-dehydroquinase family. In terms of assembly, homododecamer.

The enzyme catalyses 3-dehydroquinate = 3-dehydroshikimate + H2O. It participates in metabolic intermediate biosynthesis; chorismate biosynthesis; chorismate from D-erythrose 4-phosphate and phosphoenolpyruvate: step 3/7. In terms of biological role, catalyzes a trans-dehydration via an enolate intermediate. The chain is 3-dehydroquinate dehydratase from Trichodesmium erythraeum (strain IMS101).